We begin with the raw amino-acid sequence, 1386 residues long: Pleckstrin homology domain-containing family G member 2 (1386 aa).

2 disordered regions span residues 1–21 (MPEG…GCGR) and 36–82 (TAPA…PLPG). Composition is skewed to low complexity over residues 8 to 17 (LSLSKPSPSL) and 45 to 62 (SPRG…GSEG). S90 is subject to Phosphoserine. Residues 102–283 (RLERVAREIV…TAVAWYINDM (182 aa)) enclose the DH domain. In terms of domain architecture, PH spans 313 to 411 (ELVLEGAFRG…WIHCLQRLFF (99 aa)). Disordered stretches follow at residues 436–540 (KSKP…PSGT), 554–612 (GLRD…PSPL), 701–739 (EPAE…EEGV), 790–815 (ILED…RTAS), and 829–859 (QQMQ…SPCL). Phosphothreonine is present on T445. Residues S450 and S469 each carry the phosphoserine modification. Acidic residues predominate over residues 592-603 (SEEEEEEEEGLE). S911 and S1049 each carry phosphoserine. 2 disordered regions span residues 1037–1099 (PVPK…PLPC) and 1162–1191 (TSPK…DTQV). Polar residues-rich tracts occupy residues 1048–1059 (ESPTNIPLTKQG) and 1073–1086 (QPIQ…SSLD). T1257 carries the phosphothreonine modification. Residues S1261 and S1310 each carry the phosphoserine modification. Disordered stretches follow at residues 1291-1333 (ARRQ…ARRL) and 1367-1386 (TQES…PFHM). Residues 1301 to 1317 (PAASRGSWSSAPTSRAS) are compositionally biased toward low complexity. Positions 1318–1330 (SPPPQPQPPPPPA) are enriched in pro residues.

Functionally, may be a transforming oncogene with exchange activity for CDC42. May be a guanine-nucleotide exchange factor (GEF) for RAC1 and CDC42. Activated by the binding to subunits beta and gamma of the heterotrimeric guanine nucleotide-binding protein (G protein). Involved in the regulation of actin polymerization. The polypeptide is Pleckstrin homology domain-containing family G member 2 (PLEKHG2) (Homo sapiens (Human)).